A 329-amino-acid chain; its full sequence is NADH-quinone oxidoreductase subunit H (329 aa).

The next 9 helical transmembrane spans lie at 9 to 29 (LIKI…ATYI), 42 to 62 (GPCY…IKLF), 75 to 95 (FIFT…MAPI), 117 to 137 (IGFL…ILAG), 154 to 174 (IQLL…LMVV), 188 to 208 (GGFL…FLIA), 238 to 258 (LKWG…SFVI), 260 to 280 (IVFF…AILI), and 309 to 329 (WKIM…IILI).

Belongs to the complex I subunit 1 family. NDH-1 is composed of 14 different subunits. Subunits NuoA, H, J, K, L, M, N constitute the membrane sector of the complex.

Its subcellular location is the cell inner membrane. The enzyme catalyses a quinone + NADH + 5 H(+)(in) = a quinol + NAD(+) + 4 H(+)(out). In terms of biological role, NDH-1 shuttles electrons from NADH, via FMN and iron-sulfur (Fe-S) centers, to quinones in the respiratory chain. The immediate electron acceptor for the enzyme in this species is believed to be ubiquinone. Couples the redox reaction to proton translocation (for every two electrons transferred, four hydrogen ions are translocated across the cytoplasmic membrane), and thus conserves the redox energy in a proton gradient. This subunit may bind ubiquinone. This is NADH-quinone oxidoreductase subunit H from Helicobacter pylori (strain G27).